A 267-amino-acid polypeptide reads, in one-letter code: Phosphoethanolamine/phosphocholine phosphatase (267 aa).

Aspartate 32 acts as the Nucleophile in catalysis. Mg(2+) contacts are provided by aspartate 32 and aspartate 34. The active-site Proton donor is aspartate 34. Residues aspartate 43 and aspartate 123 each contribute to the substrate site. Aspartate 203 provides a ligand contact to Mg(2+).

Belongs to the HAD-like hydrolase superfamily. PHOSPHO family. The cofactor is Mg(2+). As to expression, expressed at sites of mineralization in bone and cartilage. Highly expressed in osteoblast cell line SaOS-2 which produces a mineralized matrix, but not in MG-63 cell line, which do not mineralize.

The protein localises to the extracellular vesicle. It carries out the reaction phosphoethanolamine + H2O = ethanolamine + phosphate. The enzyme catalyses phosphocholine + H2O = choline + phosphate. Its function is as follows. Phosphatase that has a high activity toward phosphoethanolamine (PEA) and phosphocholine (PCho). Involved in the generation of inorganic phosphate for bone mineralization. Acts in a non-redundant manner with PHOSPHO1 in skeletal mineralization: while PHOSPHO1 mediates the initiation of hydroxyapatite crystallization in the matrix vesicles (MVs), ALPL/TNAP catalyzes the spread of hydroxyapatite crystallization in the extracellular matrix. In Homo sapiens (Human), this protein is Phosphoethanolamine/phosphocholine phosphatase.